A 289-amino-acid polypeptide reads, in one-letter code: MNTLIPSEKRWIITGVLLAGLVGGALLFTSFIRAADETLFLCSTASAKSRAVAAAADYEATPIQLQAIVHYATSNVVPQQNLAEISISFNILKKLAPANFLVFGLGRDSLMWASLNPRGKTLFLEEDLEWFQKVTKDSPFLRAHHVRYRTQLQQADSLLRSYKTEPKCFPAKSYLRGNEKCKLALTGLPDEFYDTEWDLLMVDAPKGYFAEAPGRMAAIFSAAVMARNRKKPGVTHVFLHDVNRRVEKTFAEEFLCRKYRVNAAGRLWHFAIPPAAANATIDSGDYRFC.

The chain crosses the membrane as a helical span at residues 12-32 (IITGVLLAGLVGGALLFTSFI).

The protein belongs to the methyltransferase superfamily. In terms of assembly, binds to the translation initiation factors TIF3E1.

It is found in the golgi apparatus membrane. Functionally, involved in the methylation of glucuronic acid of different plant cell wall component, but mainly on side chains of arabinogalactans. This chain is Arabinogalactan O-methyltransferase 1 (AGM1), found in Arabidopsis thaliana (Mouse-ear cress).